The following is a 348-amino-acid chain: Dihydroorotase (348 aa).

Residues His17 and His19 each contribute to the Zn(2+) site. Residues 19–21 (HLR) and Asn45 contribute to the substrate site. The Zn(2+) site is built by Lys103, His140, and His178. An N6-carboxylysine modification is found at Lys103. His140 provides a ligand contact to substrate. Leu223 provides a ligand contact to substrate. Position 251 (Asp251) interacts with Zn(2+). Asp251 is a catalytic residue. Substrate contacts are provided by His255 and Ala267.

Belongs to the metallo-dependent hydrolases superfamily. DHOase family. Class II DHOase subfamily. In terms of assembly, homodimer. Requires Zn(2+) as cofactor.

It carries out the reaction (S)-dihydroorotate + H2O = N-carbamoyl-L-aspartate + H(+). It participates in pyrimidine metabolism; UMP biosynthesis via de novo pathway; (S)-dihydroorotate from bicarbonate: step 3/3. Functionally, catalyzes the reversible cyclization of carbamoyl aspartate to dihydroorotate. This is Dihydroorotase from Escherichia coli O139:H28 (strain E24377A / ETEC).